Reading from the N-terminus, the 534-residue chain is DNA-directed RNA polymerase III subunit RPC3 (534 aa).

The segment at 161–181 is disordered; that stretch reads PSVPTTENSDPGPPPPAPTLV. Residue Ser194 is modified to Phosphoserine. Residues 197-228 are disordered; that stretch reads GKGKRRRSSDEDAAGEPKAKRPKYTTDNKEPI. Positions 211-228 are enriched in basic and acidic residues; it reads GEPKAKRPKYTTDNKEPI.

It belongs to the eukaryotic RPC3/POLR3C RNA polymerase subunit family. In terms of assembly, component of the RNA polymerase III complex consisting of 17 subunits: a ten-subunit horseshoe-shaped catalytic core composed of POLR3A/RPC1, POLR3B/RPC2, POLR1C/RPAC1, POLR1D/RPAC2, POLR3K/RPC10, POLR2E/RPABC1, POLR2F/RPABC2, POLR2H/RPABC3, POLR2K/RPABC4 and POLR2L/RPABC5; a mobile stalk composed of two subunits POLR3H/RPC8 and CRCP/RPC9, protruding from the core and functioning primarily in transcription initiation; and additional subunits homologous to general transcription factors of the RNA polymerase II machinery, POLR3C/RPC3-POLR3F/RPC6-POLR3G/RPC7 heterotrimer required for transcription initiation and POLR3D/RPC4-POLR3E/RPC5 heterodimer involved in both transcription initiation and termination. Directly interacts with POLR3G/RPC7 and POLR3GL. Directly interacts with POLR3F/RPC6. Interacts with GTF3C4. As part of the RNA polymerase III complex, interacts with PKP2.

It is found in the nucleus. In terms of biological role, DNA-dependent RNA polymerase catalyzes the transcription of DNA into RNA using the four ribonucleoside triphosphates as substrates. Specific peripheric component of RNA polymerase III (Pol III) which synthesizes small non-coding RNAs including 5S rRNA, snRNAs, tRNAs and miRNAs from at least 500 distinct genomic loci. Part of POLR3C/RPC3-POLR3F/RPC6-POLR3G/RPC7 heterotrimer, coordinates the dynamics of Pol III stalk and clamp modules during the transition from apo to elongation state. Pol III plays a key role in sensing and limiting infection by intracellular bacteria and DNA viruses. Acts as a nuclear and cytosolic DNA sensor involved in innate immune response. Can sense non-self dsDNA that serves as template for transcription into dsRNA. The non-self RNA polymerase III transcripts, such as Epstein-Barr virus-encoded RNAs (EBERs) induce type I interferon and NF-kappa-B through the RIG-I pathway. Preferentially binds single-stranded DNA (ssDNA) in a sequence-independent manner. The protein is DNA-directed RNA polymerase III subunit RPC3 of Homo sapiens (Human).